Consider the following 745-residue polypeptide: MEVMNLIEQPIKVTEWQQTYTYDSGIHSGANTCVPSVSSKGLMEEDEACGRQYTLKKTTTYTQAVPQSQGDLEYQMSTTARAKRVREAMCPGVTGEDSSLLLATQVEGQTTNLQRLAEPSQLLKSAIVHLINYQDDAELATRALPELTKLLNDEDPVVVTKAAMIVNQLSKKEASRRALMGSPQLVAAVVRTMQNTSDLDTARCTTSILHNLSHHREGLLAIFKSGGIPALVRMLSSPVESVLFYAITTLHNLLLYQEGAKMAVRLADGLQKMVPLLNKNNPKFLAITTDCLQLLAYGNQESKLIILANGGPQALVQIMRNYSYEKLLWTTSRVLKVLSVCPSNKPAIVEAGGMQALGKHLTSNSPRLVQNCLWTLRNLSDVATKQEGLESVLKILVNQLSVDDVNVLTCATGTLSNLTCNNSKNKTLVTQNSGVEALIHAILRAGDKDDITEPAVCALRHLTSRHPEAEMAQNSVRLNYGIPAIVKLLNQPNQWPLVKATIGLIRNLALCPANHAPLQEASVIPRLVQLLVKAHQDAQRHVAAGTQQPYTDGVRMEEIVEGCTGALHILARDPMNRMEIFRLNTIPLFVQLLYSSVENIQRVAAGVLCELAQDKEAADAIDAEGASSPLMELLHSRNEGTATYAAAVLFRISEDKNPDYRKRVSVELTNSLFKHDPAAWEAAQSMIPINEPYADDMDATYRPMYSSDVPLDPLEMHMDMDGDYPMDTYSDGLRPPYPAADHMLA.

Residue Met1 is modified to N-acetylmethionine. O-linked (GlcNAc) threonine glycosylation is present at Thr14. 2 positions are modified to phosphoserine: Ser99 and Ser125. 12 ARM repeats span residues 132 to 171, 172 to 215, 216 to 255, 258 to 297, 298 to 341, 342 to 381, 383 to 420, 423 to 464, 470 to 510, 512 to 551, 574 to 613, and 615 to 661; these read NYQD…QLSK, KEAS…LSHH, REGL…NLLL, EGAK…LLAY, GNQE…LSVC, PSNK…NLSD, ATKQ…NLTC, SKNK…HLTS, EMAQ…NLAL, PANH…QPYT, PMNR…ELAQ, and KEAA…PDYR. Residues 132 to 297 are interaction with DSC1 and DSG1; the sequence is NYQDDAELAT…TTDCLQLLAY (166 aa). At Ser182 the chain carries Phosphoserine. The segment at 574 to 661 is interaction with DSC1; that stretch reads PMNRMEIFRL…ISEDKNPDYR (88 aa). A phosphoserine mark is found at Ser665 and Ser730.

It belongs to the beta-catenin family. In terms of assembly, homodimer. Component of an E-cadherin/catenin adhesion complex composed of at least E-cadherin/CDH1 and gamma-catenin/JUP, and possibly alpha-catenin/CTNNA1; the complex is located to adherens junctions. The stable association of CTNNA1 is controversial as CTNNA1 was shown not to bind to F-actin when assembled in the complex. Interacts with MUC1. Interacts with CAV1. Interacts with PTPRJ. Interacts with DSG1. Interacts with DSC1 and DSC2. Interacts with PKP2. Interacts with PKP3 (via N-terminus); the interaction is required for PKP3 localization to desmosome cell-cell junctions. Interacts with DSG4. May be phosphorylated by FER.

The protein localises to the cell junction. The protein resides in the adherens junction. It localises to the desmosome. It is found in the cytoplasm. Its subcellular location is the cytoskeleton. The protein localises to the cell membrane. The protein resides in the nucleus. Functionally, common junctional plaque protein. The membrane-associated plaques are architectural elements in an important strategic position to influence the arrangement and function of both the cytoskeleton and the cells within the tissue. The presence of plakoglobin in both the desmosomes and in the intermediate junctions suggests that it plays a central role in the structure and function of submembranous plaques. Acts as a substrate for VE-PTP and is required by it to stimulate VE-cadherin function in endothelial cells. Can replace beta-catenin in E-cadherin/catenin adhesion complexes which are proposed to couple cadherins to the actin cytoskeleton. The protein is Junction plakoglobin of Sus scrofa (Pig).